The chain runs to 671 residues: DNA ligase (671 aa).

NAD(+)-binding positions include 32 to 36 (DVEYD), 81 to 82 (SL), and E114. The active-site N6-AMP-lysine intermediate is K116. 4 residues coordinate NAD(+): R137, E175, K292, and K316. Positions 410, 413, 428, and 434 each coordinate Zn(2+). The BRCT domain occupies 592-671 (EKNNYFSGKN…AEFYQILGIR (80 aa)).

The protein belongs to the NAD-dependent DNA ligase family. LigA subfamily. It depends on Mg(2+) as a cofactor. Mn(2+) is required as a cofactor.

The enzyme catalyses NAD(+) + (deoxyribonucleotide)n-3'-hydroxyl + 5'-phospho-(deoxyribonucleotide)m = (deoxyribonucleotide)n+m + AMP + beta-nicotinamide D-nucleotide.. Its function is as follows. DNA ligase that catalyzes the formation of phosphodiester linkages between 5'-phosphoryl and 3'-hydroxyl groups in double-stranded DNA using NAD as a coenzyme and as the energy source for the reaction. It is essential for DNA replication and repair of damaged DNA. This chain is DNA ligase, found in Baumannia cicadellinicola subsp. Homalodisca coagulata.